A 540-amino-acid polypeptide reads, in one-letter code: Homoserine O-acetyltransferase (540 aa).

Residues 66-404 (NVILICHALT…QHGHDAFLLE (339 aa)) enclose the AB hydrolase-1 domain. The active-site Nucleophile is the serine 171. Position 240 (arginine 240) interacts with substrate. The segment at 262 to 284 (QDTDKSGIKGTTGTEGKNSSEIS) is disordered. Active-site residues include aspartate 365 and histidine 398. Aspartate 399 is a substrate binding site. 2 consecutive CBS domains span residues 425–484 (MNRN…ELDE) and 486–540 (ITRD…GKYD).

The protein belongs to the AB hydrolase superfamily. MetX family. In terms of assembly, homodimer.

The protein resides in the cytoplasm. The catalysed reaction is L-homoserine + acetyl-CoA = O-acetyl-L-homoserine + CoA. The protein operates within amino-acid biosynthesis; L-methionine biosynthesis via de novo pathway; O-acetyl-L-homoserine from L-homoserine: step 1/1. Transfers an acetyl group from acetyl-CoA to L-homoserine, forming acetyl-L-homoserine. In vitro, can also use propionyl-CoA or butiryl-CoA as acyl donor. The sequence is that of Homoserine O-acetyltransferase from Methanosarcina acetivorans (strain ATCC 35395 / DSM 2834 / JCM 12185 / C2A).